The following is a 280-amino-acid chain: Elongation factor Ts (280 aa).

The involved in Mg(2+) ion dislocation from EF-Tu stretch occupies residues 82–85; sequence TDFV.

The protein belongs to the EF-Ts family.

The protein resides in the cytoplasm. In terms of biological role, associates with the EF-Tu.GDP complex and induces the exchange of GDP to GTP. It remains bound to the aminoacyl-tRNA.EF-Tu.GTP complex up to the GTP hydrolysis stage on the ribosome. This is Elongation factor Ts from Baumannia cicadellinicola subsp. Homalodisca coagulata.